We begin with the raw amino-acid sequence, 364 residues long: tRNA 2-selenouridine synthase (364 aa).

Residues 14-137 (LLADTPLIDV…LRQTAIQATW (124 aa)) enclose the Rhodanese domain. Residue C97 is the S-selanylcysteine intermediate of the active site.

Belongs to the SelU family. As to quaternary structure, monomer.

It catalyses the reaction 5-methylaminomethyl-2-thiouridine(34) in tRNA + selenophosphate + (2E)-geranyl diphosphate + H2O + H(+) = 5-methylaminomethyl-2-selenouridine(34) in tRNA + (2E)-thiogeraniol + phosphate + diphosphate. It carries out the reaction 5-methylaminomethyl-2-thiouridine(34) in tRNA + (2E)-geranyl diphosphate = 5-methylaminomethyl-S-(2E)-geranyl-thiouridine(34) in tRNA + diphosphate. The catalysed reaction is 5-methylaminomethyl-S-(2E)-geranyl-thiouridine(34) in tRNA + selenophosphate + H(+) = 5-methylaminomethyl-2-(Se-phospho)selenouridine(34) in tRNA + (2E)-thiogeraniol. The enzyme catalyses 5-methylaminomethyl-2-(Se-phospho)selenouridine(34) in tRNA + H2O = 5-methylaminomethyl-2-selenouridine(34) in tRNA + phosphate. Involved in the post-transcriptional modification of the uridine at the wobble position (U34) of tRNA(Lys), tRNA(Glu) and tRNA(Gln). Catalyzes the conversion of 2-thiouridine (S2U-RNA) to 2-selenouridine (Se2U-RNA). Acts in a two-step process involving geranylation of 2-thiouridine (S2U) to S-geranyl-2-thiouridine (geS2U) and subsequent selenation of the latter derivative to 2-selenouridine (Se2U) in the tRNA chain. In Salmonella paratyphi A (strain ATCC 9150 / SARB42), this protein is tRNA 2-selenouridine synthase.